The chain runs to 145 residues: Ribosome-binding factor A (145 aa).

Basic and acidic residues predominate over residues 122–132 (KVQRDLESAPR). The disordered stretch occupies residues 122–145 (KVQRDLESAPREDDEGEPDSSSRD).

The protein belongs to the RbfA family. In terms of assembly, monomer. Binds 30S ribosomal subunits, but not 50S ribosomal subunits or 70S ribosomes.

It is found in the cytoplasm. Functionally, one of several proteins that assist in the late maturation steps of the functional core of the 30S ribosomal subunit. Associates with free 30S ribosomal subunits (but not with 30S subunits that are part of 70S ribosomes or polysomes). Required for efficient processing of 16S rRNA. May interact with the 5'-terminal helix region of 16S rRNA. The protein is Ribosome-binding factor A of Methylorubrum extorquens (strain PA1) (Methylobacterium extorquens).